The sequence spans 169 residues: Putative hydrolase 111R (169 aa).

A Nudix hydrolase domain is found at 46–169 (FEKRKAGVFV…QKILMALSCN (124 aa)). The Nudix box signature appears at 76-98 (GHMEAYDHSPKTCAERELKEETG). Residues glutamate 92, glutamate 96, and aspartate 138 each contribute to the Mg(2+) site.

The protein belongs to the Nudix hydrolase family. Mg(2+) is required as a cofactor. Mn(2+) serves as cofactor.

This Aedes vexans (Inland floodwater mosquito) protein is Putative hydrolase 111R.